Reading from the N-terminus, the 325-residue chain is UPF0285 protein Mbar_A0208 (325 aa).

This sequence belongs to the UPF0285 family.

The sequence is that of UPF0285 protein Mbar_A0208 from Methanosarcina barkeri (strain Fusaro / DSM 804).